A 434-amino-acid polypeptide reads, in one-letter code: Chaperone SurA (434 aa).

The first 22 residues, 1–22 (MKKWKSSLLGIAIWSLAASSMA), serve as a signal peptide directing secretion. 2 consecutive PpiC domains span residues 173 to 274 (TVQF…KVND) and 283 to 383 (VTEV…EVLD).

Its subcellular location is the periplasm. It carries out the reaction [protein]-peptidylproline (omega=180) = [protein]-peptidylproline (omega=0). In terms of biological role, chaperone involved in the correct folding and assembly of outer membrane proteins. Recognizes specific patterns of aromatic residues and the orientation of their side chains, which are found more frequently in integral outer membrane proteins. May act in both early periplasmic and late outer membrane-associated steps of protein maturation. This Photobacterium profundum (strain SS9) protein is Chaperone SurA.